Reading from the N-terminus, the 158-residue chain is Transcription elongation factor GreA (158 aa).

The protein belongs to the GreA/GreB family.

Necessary for efficient RNA polymerase transcription elongation past template-encoded arresting sites. The arresting sites in DNA have the property of trapping a certain fraction of elongating RNA polymerases that pass through, resulting in locked ternary complexes. Cleavage of the nascent transcript by cleavage factors such as GreA or GreB allows the resumption of elongation from the new 3'terminus. GreA releases sequences of 2 to 3 nucleotides. This is Transcription elongation factor GreA from Zymomonas mobilis subsp. mobilis (strain ATCC 31821 / ZM4 / CP4).